Consider the following 691-residue polypeptide: MSNSFTLPLRPARQKANREDDLAVKIAQINAQKGSFRDVTEASLLAEIEAARAVGDGEAEAVDVKTGEDEEENREEKLFKSRLEISQFAMNAHMEATYALEFVSLLLSKHAPRQAETSMSPLLKQKVPLGSLGADHIKPPEQSETQKRDVDAVSRGWKLESFDAAANKLLQSAQRLEEDIAAETKYWSEVLKIKEKGWKVCRLPQERQTLGVHFGFLESTQNFRDRGLAALRKGEAGRLILDRGIQLKPPRFVRVRVQRGDQTLGLTIPAISKQLDDQCLDGRIREARDSLYEEELFYELNREARVLLQYGVEIRRDLLKFPADDNKHIFVDLVGLDEALPDIGGLDPLDNLLAEGVAKSFRILLSYAHRKNHHRRTRVPPPVTPNKRPAPEYNIIRPLLCYFQHRSHYQWFTSFFGTLSKTLRSAGLKCSYTLYPLMKRPQSRAGSSQQTLTVSSVERLIDTLINPSESIISCNLISQGSVFRVRITTNVNPNGLGSEFELVTNLAHFPAQQSPFRFGLREDVRDLIIHLFTLDLVYLVPSLVKGSASAGASQYLISRYTGSQAFVEEESTDENEFAPSPAAKQDDVYLLPWQPTFPQQGELTAYSPARCRTKKLQIQLQSDQLQLRCFWVRHRGPSTKADEQPGERLFTWRAVDMLGGAEESSRPTLQRVMELLGEKYDDQTVQNIGSK.

A coiled-coil region spans residues 158–185 (KLESFDAAANKLLQSAQRLEEDIAAETK).

This sequence belongs to the Mediator complex subunit 17 family. Component of the Mediator complex.

It is found in the nucleus. In terms of biological role, component of the Mediator complex, a coactivator involved in the regulated transcription of nearly all RNA polymerase II-dependent genes. Mediator functions as a bridge to convey information from gene-specific regulatory proteins to the basal RNA polymerase II transcription machinery. Mediator is recruited to promoters by direct interactions with regulatory proteins and serves as a scaffold for the assembly of a functional preinitiation complex with RNA polymerase II and the general transcription factors. This is Mediator of RNA polymerase II transcription subunit 17 (SRB4) from Coccidioides immitis (strain RS) (Valley fever fungus).